Reading from the N-terminus, the 190-residue chain is UPF0149 protein NT01EI_3357 (190 aa).

It belongs to the UPF0149 family.

The protein is UPF0149 protein NT01EI_3357 of Edwardsiella ictaluri (strain 93-146).